A 282-amino-acid chain; its full sequence is Shikimate dehydrogenase (NADP(+)) (282 aa).

Shikimate is bound by residues 19 to 21 (TQS) and Thr66. Lys70 functions as the Proton acceptor in the catalytic mechanism. Shikimate contacts are provided by Asn91 and Asp107. NADP(+)-binding positions include 132 to 136 (GAGGA), 155 to 160 (NRTITR), Ile224, and Gly246.

The protein belongs to the shikimate dehydrogenase family. Homodimer.

It carries out the reaction shikimate + NADP(+) = 3-dehydroshikimate + NADPH + H(+). It functions in the pathway metabolic intermediate biosynthesis; chorismate biosynthesis; chorismate from D-erythrose 4-phosphate and phosphoenolpyruvate: step 4/7. Its function is as follows. Involved in the biosynthesis of the chorismate, which leads to the biosynthesis of aromatic amino acids. Catalyzes the reversible NADPH linked reduction of 3-dehydroshikimate (DHSA) to yield shikimate (SA). This chain is Shikimate dehydrogenase (NADP(+)), found in Buchnera aphidicola subsp. Baizongia pistaciae (strain Bp).